The sequence spans 459 residues: Serine--tRNA ligase (459 aa).

254-256 (TAE) is an L-serine binding site. ATP-binding positions include 285-287 (RKE) and Val301. Residue Glu308 participates in L-serine binding. 372–375 (EMVS) is an ATP binding site. Residue Thr408 coordinates L-serine.

It belongs to the class-II aminoacyl-tRNA synthetase family. Type-1 seryl-tRNA synthetase subfamily. Homodimer. The tRNA molecule binds across the dimer.

Its subcellular location is the cytoplasm. It catalyses the reaction tRNA(Ser) + L-serine + ATP = L-seryl-tRNA(Ser) + AMP + diphosphate + H(+). The catalysed reaction is tRNA(Sec) + L-serine + ATP = L-seryl-tRNA(Sec) + AMP + diphosphate + H(+). It functions in the pathway aminoacyl-tRNA biosynthesis; selenocysteinyl-tRNA(Sec) biosynthesis; L-seryl-tRNA(Sec) from L-serine and tRNA(Sec): step 1/1. Its function is as follows. Catalyzes the attachment of serine to tRNA(Ser). Is also able to aminoacylate tRNA(Sec) with serine, to form the misacylated tRNA L-seryl-tRNA(Sec), which will be further converted into selenocysteinyl-tRNA(Sec). This chain is Serine--tRNA ligase, found in Desulfurococcus amylolyticus (strain DSM 18924 / JCM 16383 / VKM B-2413 / 1221n) (Desulfurococcus kamchatkensis).